Consider the following 434-residue polypeptide: Methylenetetrahydrofolate--tRNA-(uracil-5-)-methyltransferase TrmFO (434 aa).

9–14 provides a ligand contact to FAD; that stretch reads GAGLAG.

This sequence belongs to the MnmG family. TrmFO subfamily. FAD is required as a cofactor.

The protein localises to the cytoplasm. It catalyses the reaction uridine(54) in tRNA + (6R)-5,10-methylene-5,6,7,8-tetrahydrofolate + NADH + H(+) = 5-methyluridine(54) in tRNA + (6S)-5,6,7,8-tetrahydrofolate + NAD(+). It carries out the reaction uridine(54) in tRNA + (6R)-5,10-methylene-5,6,7,8-tetrahydrofolate + NADPH + H(+) = 5-methyluridine(54) in tRNA + (6S)-5,6,7,8-tetrahydrofolate + NADP(+). Catalyzes the folate-dependent formation of 5-methyl-uridine at position 54 (M-5-U54) in all tRNAs. The protein is Methylenetetrahydrofolate--tRNA-(uracil-5-)-methyltransferase TrmFO of Listeria monocytogenes serovar 1/2a (strain ATCC BAA-679 / EGD-e).